Consider the following 134-residue polypeptide: MGSSRGESFGNFVDRIPMKMQPPGAQAETRVSSLLQRQGWQLLDRNWSCRWGELDLVLHKNEQLLVVEVKKRRSLAWGPWSVDPTKRRRLGRAISCWRAEHPIQTDWLLQVAVAVVPLPPSQGAPRWCRLDRLC.

The protein belongs to the UPF0102 family.

This is UPF0102 protein SYNW1051 from Parasynechococcus marenigrum (strain WH8102).